A 303-amino-acid polypeptide reads, in one-letter code: Inosose dehydratase (303 aa).

Belongs to the IolE/MocC family. It depends on glutathione as a cofactor. Co(2+) is required as a cofactor. Requires Mn(2+) as cofactor.

The catalysed reaction is scyllo-inosose = 3D-3,5/4-trihydroxycyclohexane-1,2-dione + H2O. The protein operates within polyol metabolism; myo-inositol degradation into acetyl-CoA; acetyl-CoA from myo-inositol: step 2/7. Functionally, catalyzes the dehydration of inosose (2-keto-myo-inositol, 2KMI or 2,4,6/3,5-pentahydroxycyclohexanone) to 3D-(3,5/4)-trihydroxycyclohexane-1,2-dione (D-2,3-diketo-4-deoxy-epi-inositol). This Halalkalibacterium halodurans (strain ATCC BAA-125 / DSM 18197 / FERM 7344 / JCM 9153 / C-125) (Bacillus halodurans) protein is Inosose dehydratase.